A 148-amino-acid chain; its full sequence is MKLVLTQEVPGLGSPGDIVDVADGYGRNYLVPRRYAILATRGAERQVAQIKRARDARAVRDLDHAKEIAGQLSGLSVRLVSRAGKEGRLFGSVTAADVVSAVTDAGGPALDRRRVELSTPIKSLGSHTVAVHLHPEVSAKLTVQVTSA.

The protein belongs to the bacterial ribosomal protein bL9 family.

In terms of biological role, binds to the 23S rRNA. The polypeptide is Large ribosomal subunit protein bL9 (Parafrankia sp. (strain EAN1pec)).